The primary structure comprises 361 residues: Ribosomal RNA large subunit methyltransferase M (361 aa).

Residues Ser-187, 220 to 223 (CPGG), Asp-239, Asp-259, and Asp-276 each bind S-adenosyl-L-methionine. Residue Lys-305 is the Proton acceptor of the active site.

The protein belongs to the class I-like SAM-binding methyltransferase superfamily. RNA methyltransferase RlmE family. RlmM subfamily. In terms of assembly, monomer.

Its subcellular location is the cytoplasm. The catalysed reaction is cytidine(2498) in 23S rRNA + S-adenosyl-L-methionine = 2'-O-methylcytidine(2498) in 23S rRNA + S-adenosyl-L-homocysteine + H(+). Catalyzes the 2'-O-methylation at nucleotide C2498 in 23S rRNA. This is Ribosomal RNA large subunit methyltransferase M from Shewanella amazonensis (strain ATCC BAA-1098 / SB2B).